Reading from the N-terminus, the 436-residue chain is Na(+)/H(+) antiporter NhaA 2 (436 aa).

A run of 11 helical transmembrane segments spans residues 35–55, 80–100, 116–136, 147–167, 176–196, 201–221, 226–246, 283–303, 313–333, 354–374, and 385–405; these read FGGGLLLLGAVLALLWANSPW, LATWAADGLLAIFFFVVGLEL, ALPVVAAIGGMIVPALIYVGI, GWAIPTATDIAFALAVLAVIG, AFLLTLAVVDDLLAITVIAIF, FKLTPLLVALLPIALFGLLVQ, WWWALIPLAVVAWTLVHESGV, VSAGFAVPVFAFFAAGVSLRG, PIVVGIVAGLVLGKVLGIFGS, LLGVSLLAGIGFTVSLLIGEL, and VKAAVLTGSVIAALLASAVLS.

Belongs to the NhaA Na(+)/H(+) (TC 2.A.33) antiporter family.

It localises to the cell membrane. The catalysed reaction is Na(+)(in) + 2 H(+)(out) = Na(+)(out) + 2 H(+)(in). Na(+)/H(+) antiporter that extrudes sodium in exchange for external protons. In Salinispora arenicola (strain CNS-205), this protein is Na(+)/H(+) antiporter NhaA 2.